The following is a 130-amino-acid chain: Small ribosomal subunit protein uS9 (130 aa).

The protein belongs to the universal ribosomal protein uS9 family.

This Thioalkalivibrio sulfidiphilus (strain HL-EbGR7) protein is Small ribosomal subunit protein uS9.